Reading from the N-terminus, the 570-residue chain is BRICHOS domain-containing protein C09F5.1 (570 aa).

Residues 1-288 lie on the Cytoplasmic side of the membrane; sequence MVVEQIEVIE…YTPELLRSLC (288 aa). 2 stretches are compositionally biased toward polar residues: residues 93 to 107 and 228 to 246; these read SGAT…SGDS and TSTL…SLVS. 2 disordered regions span residues 93–116 and 218–248; these read SGAT…GADR and SSWD…VSRE. A helical membrane pass occupies residues 289-309; the sequence is CILLLLLLLLFLMFIIFNAIF. The Extracellular segment spans residues 310 to 570; that stretch reads NRYAVSEFLL…RKSINNATLV (261 aa). Positions 369–461 constitute a BRICHOS domain; it reads TAVDFNTGYV…IDDCEGAQWY (93 aa). The cysteines at positions 395 and 455 are disulfide-linked.

Its subcellular location is the membrane. This Caenorhabditis elegans protein is BRICHOS domain-containing protein C09F5.1.